The primary structure comprises 396 residues: Ornithine aminotransferase (396 aa).

Lysine 255 carries the post-translational modification N6-(pyridoxal phosphate)lysine.

Belongs to the class-III pyridoxal-phosphate-dependent aminotransferase family. OAT subfamily. Pyridoxal 5'-phosphate serves as cofactor.

The protein resides in the cytoplasm. The catalysed reaction is a 2-oxocarboxylate + L-ornithine = L-glutamate 5-semialdehyde + an L-alpha-amino acid. The protein operates within amino-acid biosynthesis; L-proline biosynthesis; L-glutamate 5-semialdehyde from L-ornithine: step 1/1. Catalyzes the interconversion of ornithine to glutamate semialdehyde. The protein is Ornithine aminotransferase of Staphylococcus epidermidis (strain ATCC 35984 / DSM 28319 / BCRC 17069 / CCUG 31568 / BM 3577 / RP62A).